A 207-amino-acid chain; its full sequence is V-type ATP synthase subunit D (207 aa).

Belongs to the V-ATPase D subunit family.

Functionally, produces ATP from ADP in the presence of a proton gradient across the membrane. The protein is V-type ATP synthase subunit D of Streptococcus gordonii (strain Challis / ATCC 35105 / BCRC 15272 / CH1 / DL1 / V288).